We begin with the raw amino-acid sequence, 483 residues long: Protein DETOXIFICATION 6 (483 aa).

12 helical membrane passes run 38–58 (ALPM…SVMV), 69–89 (GVAL…FGLA), 113–133 (FSAI…WFYM), 146–166 (ISKV…AQAV), 187–207 (AITT…AFGL), 211–231 (GAAL…ALYV), 263–283 (AAMT…SGLL), 292–312 (VLSI…GIGA), 334–354 (VFAG…LLFI), 376–396 (LSPL…LGGV), 405–425 (IGAW…GLFL), and 436–456 (LWIG…IVTA).

This sequence belongs to the multi antimicrobial extrusion (MATE) (TC 2.A.66.1) family.

It is found in the membrane. The sequence is that of Protein DETOXIFICATION 6 from Arabidopsis thaliana (Mouse-ear cress).